A 239-amino-acid chain; its full sequence is 1-(5-phosphoribosyl)-5-[(5-phosphoribosylamino)methylideneamino] imidazole-4-carboxamide isomerase (239 aa).

The active-site Proton acceptor is aspartate 8. Aspartate 129 (proton donor) is an active-site residue.

It belongs to the HisA/HisF family.

It is found in the cytoplasm. The enzyme catalyses 1-(5-phospho-beta-D-ribosyl)-5-[(5-phospho-beta-D-ribosylamino)methylideneamino]imidazole-4-carboxamide = 5-[(5-phospho-1-deoxy-D-ribulos-1-ylimino)methylamino]-1-(5-phospho-beta-D-ribosyl)imidazole-4-carboxamide. It participates in amino-acid biosynthesis; L-histidine biosynthesis; L-histidine from 5-phospho-alpha-D-ribose 1-diphosphate: step 4/9. The polypeptide is 1-(5-phosphoribosyl)-5-[(5-phosphoribosylamino)methylideneamino] imidazole-4-carboxamide isomerase (Bacillus thuringiensis (strain Al Hakam)).